A 254-amino-acid chain; its full sequence is Thiazole synthase (254 aa).

Lysine 95 functions as the Schiff-base intermediate with DXP in the catalytic mechanism. 1-deoxy-D-xylulose 5-phosphate-binding positions include glycine 156, alanine 182–glycine 183, and asparagine 204–threonine 205.

This sequence belongs to the ThiG family. In terms of assembly, homotetramer. Forms heterodimers with either ThiH or ThiS.

Its subcellular location is the cytoplasm. It catalyses the reaction [ThiS sulfur-carrier protein]-C-terminal-Gly-aminoethanethioate + 2-iminoacetate + 1-deoxy-D-xylulose 5-phosphate = [ThiS sulfur-carrier protein]-C-terminal Gly-Gly + 2-[(2R,5Z)-2-carboxy-4-methylthiazol-5(2H)-ylidene]ethyl phosphate + 2 H2O + H(+). It participates in cofactor biosynthesis; thiamine diphosphate biosynthesis. Functionally, catalyzes the rearrangement of 1-deoxy-D-xylulose 5-phosphate (DXP) to produce the thiazole phosphate moiety of thiamine. Sulfur is provided by the thiocarboxylate moiety of the carrier protein ThiS. In vitro, sulfur can be provided by H(2)S. The chain is Thiazole synthase from Shewanella sediminis (strain HAW-EB3).